The sequence spans 186 residues: Peptide deformylase (186 aa).

Fe cation is bound by residues Cys99 and His141. Glu142 is a catalytic residue. Fe cation is bound at residue His145.

This sequence belongs to the polypeptide deformylase family. Fe(2+) is required as a cofactor.

The enzyme catalyses N-terminal N-formyl-L-methionyl-[peptide] + H2O = N-terminal L-methionyl-[peptide] + formate. Its function is as follows. Removes the formyl group from the N-terminal Met of newly synthesized proteins. Requires at least a dipeptide for an efficient rate of reaction. N-terminal L-methionine is a prerequisite for activity but the enzyme has broad specificity at other positions. This is Peptide deformylase from Chlamydia felis (strain Fe/C-56) (Chlamydophila felis).